Here is a 639-residue protein sequence, read N- to C-terminus: Phosphatidylinositol 3,4,5-trisphosphate 3-phosphatase cnrN (639 aa).

The 171-residue stretch at 20–190 (FKSKEMDLDL…NYFKEIVSGS (171 aa)) folds into the Phosphatase tensin-type domain. The Phosphocysteine intermediate role is filled by cysteine 129. A C2 tensin-type domain is found at 195 to 350 (EFVLTFRSIE…LQMECRFQNN (156 aa)). Disordered regions lie at residues 243–265 (INNDNSESNNNNNNNNNNNNNNN), 395–429 (NNILASSAPTPLTTTTTTTTTTTTTSLPSSEHSTP), 451–498 (SSSG…SCSS), 519–567 (NNNN…RKRK), and 598–628 (FTKKINPNNNEENVDQKTLPILKKETNDPSE). Low complexity-rich tracts occupy residues 244–265 (NNDNSESNNNNNNNNNNNNNNN), 395–424 (NNILASSAPTPLTTTTTTTTTTTTTSLPSS), 458–486 (NSSRNSNSNSRGGSSNSSSNRSSTSSRSS), and 519–554 (NNNNNNNNNNNNNNNNNNNNNKNSNNNNNESSSNSN). Over residues 598-608 (FTKKINPNNNE) the composition is skewed to polar residues. The span at 619–628 (LKKETNDPSE) shows a compositional bias: basic and acidic residues.

The cofactor is Mg(2+).

It catalyses the reaction a 1,2-diacyl-sn-glycero-3-phospho-(1D-myo-inositol-3,4,5-trisphosphate) + H2O = a 1,2-diacyl-sn-glycero-3-phospho-(1D-myo-inositol-4,5-bisphosphate) + phosphate. Protein phosphatase that negatively regulates PI3K-dependent pathways. Regulates cAMP signal transduction to control territory size. During development, a lawn of Dictyostelium cells breaks up into territories where cells aggregate in dendritic streams to form groups of 20'000 cells. This chain is Phosphatidylinositol 3,4,5-trisphosphate 3-phosphatase cnrN (cnrN), found in Dictyostelium discoideum (Social amoeba).